A 709-amino-acid chain; its full sequence is Ral guanine nucleotide dissociation stimulator-like 3 (709 aa).

The disordered stretch occupies residues 26 to 55; it reads VYSVSLRRQRSQRSTPERSGEGQTPIPATD. Residues 64–201 enclose the N-terminal Ras-GEF domain; it reads KVRALRAARL…LLEDFLKEAK (138 aa). Disordered regions lie at residues 203 to 225, 395 to 416, and 502 to 604; these read EQTE…TPGS, SQEE…KLPP, and PPAA…SRVP. One can recognise a Ras-GEF domain in the interval 248-503; sequence SVDDVAEQLT…YRVSRVIEPP (256 aa). Low complexity-rich tracts occupy residues 502–511 and 533–551; these read PPAASCPSSP and SSPG…SVSP. A phosphoserine mark is found at S506 and S510. The span at 552–576 shows a compositional bias: pro residues; the sequence is GSPPSSPRNREPPPPGSPPASPGPQ. Phosphoserine is present on residues S553, S568, S572, S577, and S600. The segment at 611-706 is interaction with HRAS, MRAS and RIT1; it reads SEARVIRVSI…KEGTGHTLSA (96 aa). Residues 612-699 enclose the Ras-associating domain; sequence EARVIRVSIN…GDFLLRRKEG (88 aa).

Interacts with GTP-bound forms of RIT1, HRAS and MRAS. Widely expressed. Expressed at high levels in the liver and kidney.

Its function is as follows. Guanine nucleotide exchange factor (GEF) for Ral-A. Potential effector of GTPase HRas and Ras-related protein M-Ras. Negatively regulates Elk-1-dependent gene induction downstream of HRas and MEKK1. The protein is Ral guanine nucleotide dissociation stimulator-like 3 (Rgl3) of Mus musculus (Mouse).